Consider the following 336-residue polypeptide: Glyceraldehyde-3-phosphate dehydrogenase 1 (336 aa).

NAD(+)-binding positions include 12-13 (RI), Asp-34, and Arg-79. D-glyceraldehyde 3-phosphate contacts are provided by residues 149 to 151 (SCT), Thr-180, 209 to 210 (TG), and Arg-232. The Nucleophile role is filled by Cys-150. Asn-314 provides a ligand contact to NAD(+).

Belongs to the glyceraldehyde-3-phosphate dehydrogenase family. In terms of assembly, homotetramer.

The protein resides in the cytoplasm. It carries out the reaction D-glyceraldehyde 3-phosphate + phosphate + NAD(+) = (2R)-3-phospho-glyceroyl phosphate + NADH + H(+). It participates in carbohydrate degradation; glycolysis; pyruvate from D-glyceraldehyde 3-phosphate: step 1/5. Its activity is regulated as follows. Inhibited by koningic acid through the interaction of cysteine residues with koningic acid even at very low concentrations. The protein is Glyceraldehyde-3-phosphate dehydrogenase 1 (gpd1) of Trichoderma koningii (Hypocrea koningii).